Reading from the N-terminus, the 436-residue chain is GTPase Der (436 aa).

2 consecutive EngA-type G domains span residues 4 to 167 (PTVA…PVEE) and 175 to 351 (IRFS…ESQN). GTP-binding positions include 10-17 (GRPNVGKS), 57-61 (DTGGI), 119-122 (NKVD), 181-188 (GRPNVGKS), 229-233 (DTAGM), and 294-297 (NKWD). Positions 352-436 (KRIPSAVLND…PIHLIARKRK (85 aa)) constitute a KH-like domain.

The protein belongs to the TRAFAC class TrmE-Era-EngA-EngB-Septin-like GTPase superfamily. EngA (Der) GTPase family. Associates with the 50S ribosomal subunit.

GTPase that plays an essential role in the late steps of ribosome biogenesis. This Streptococcus uberis (strain ATCC BAA-854 / 0140J) protein is GTPase Der.